Here is a 203-residue protein sequence, read N- to C-terminus: Peptidyl-tRNA hydrolase (203 aa).

Y18 contributes to the tRNA binding site. The active-site Proton acceptor is H23. Residues F69, N71, and N117 each contribute to the tRNA site.

The protein belongs to the PTH family. Monomer.

The protein localises to the cytoplasm. It catalyses the reaction an N-acyl-L-alpha-aminoacyl-tRNA + H2O = an N-acyl-L-amino acid + a tRNA + H(+). In terms of biological role, hydrolyzes ribosome-free peptidyl-tRNAs (with 1 or more amino acids incorporated), which drop off the ribosome during protein synthesis, or as a result of ribosome stalling. Functionally, catalyzes the release of premature peptidyl moieties from peptidyl-tRNA molecules trapped in stalled 50S ribosomal subunits, and thus maintains levels of free tRNAs and 50S ribosomes. The protein is Peptidyl-tRNA hydrolase of Prochlorococcus marinus subsp. pastoris (strain CCMP1986 / NIES-2087 / MED4).